The primary structure comprises 132 residues: Transmembrane protein 170B (132 aa).

Residues 1 to 37 (MRAEGADHSMINLSVQQVLSLWAHGTVLRNLTEMWYW) lie on the Extracellular side of the membrane. Residue N12 is glycosylated (N-linked (GlcNAc...) asparagine). The helical transmembrane segment at 38–58 (IFLWALFSSLFVHGAAGVLMF) threads the bilayer. The Cytoplasmic portion of the chain corresponds to 59–68 (VMLQRHRQGR). A helical transmembrane segment spans residues 69–89 (VLSIIAVSIGFLASVTGAMIT). Over 90 to 104 (SAAVAGIYRVAGKNM) the chain is Extracellular. The chain crosses the membrane as a helical span at residues 105 to 125 (APLEALVWGVGQTVLTLIISF). The Cytoplasmic portion of the chain corresponds to 126–132 (SRILATL).

Belongs to the TMEM170 family. As to quaternary structure, interacts with CTNNB1.

The protein resides in the cell membrane. This is Transmembrane protein 170B (Tmem170b) from Rattus norvegicus (Rat).